We begin with the raw amino-acid sequence, 239 residues long: Purine nucleoside phosphorylase DeoD-type (239 aa).

His5 is a binding site for a purine D-ribonucleoside. Phosphate-binding positions include Gly21, Arg25, Arg44, and 88–91 (RVGS). A purine D-ribonucleoside contacts are provided by residues 180 to 182 (EME) and 204 to 205 (SD). Asp205 acts as the Proton donor in catalysis.

The protein belongs to the PNP/UDP phosphorylase family. In terms of assembly, homohexamer; trimer of homodimers.

It carries out the reaction a purine D-ribonucleoside + phosphate = a purine nucleobase + alpha-D-ribose 1-phosphate. The catalysed reaction is a purine 2'-deoxy-D-ribonucleoside + phosphate = a purine nucleobase + 2-deoxy-alpha-D-ribose 1-phosphate. Its function is as follows. Catalyzes the reversible phosphorolytic breakdown of the N-glycosidic bond in the beta-(deoxy)ribonucleoside molecules, with the formation of the corresponding free purine bases and pentose-1-phosphate. This is Purine nucleoside phosphorylase DeoD-type from Salmonella heidelberg (strain SL476).